A 169-amino-acid polypeptide reads, in one-letter code: Ribosome-binding factor A (169 aa).

Residues 124–169 (AGAKHAGDADPYKSDIPEDVEIDEDDFDEEDEDLIDDEELDEDGNK) are disordered. The segment covering 128–139 (HAGDADPYKSDI) has biased composition (basic and acidic residues). Residues 140 to 169 (PEDVEIDEDDFDEEDEDLIDDEELDEDGNK) show a composition bias toward acidic residues.

Belongs to the RbfA family. As to quaternary structure, monomer. Binds 30S ribosomal subunits, but not 50S ribosomal subunits or 70S ribosomes.

It localises to the cytoplasm. In terms of biological role, one of several proteins that assist in the late maturation steps of the functional core of the 30S ribosomal subunit. Associates with free 30S ribosomal subunits (but not with 30S subunits that are part of 70S ribosomes or polysomes). Required for efficient processing of 16S rRNA. May interact with the 5'-terminal helix region of 16S rRNA. This chain is Ribosome-binding factor A, found in Arthrobacter sp. (strain FB24).